The primary structure comprises 95 residues: Aspartyl/glutamyl-tRNA(Asn/Gln) amidotransferase subunit C (95 aa).

The protein belongs to the GatC family. In terms of assembly, heterotrimer of A, B and C subunits.

The catalysed reaction is L-glutamyl-tRNA(Gln) + L-glutamine + ATP + H2O = L-glutaminyl-tRNA(Gln) + L-glutamate + ADP + phosphate + H(+). It carries out the reaction L-aspartyl-tRNA(Asn) + L-glutamine + ATP + H2O = L-asparaginyl-tRNA(Asn) + L-glutamate + ADP + phosphate + 2 H(+). Allows the formation of correctly charged Asn-tRNA(Asn) or Gln-tRNA(Gln) through the transamidation of misacylated Asp-tRNA(Asn) or Glu-tRNA(Gln) in organisms which lack either or both of asparaginyl-tRNA or glutaminyl-tRNA synthetases. The reaction takes place in the presence of glutamine and ATP through an activated phospho-Asp-tRNA(Asn) or phospho-Glu-tRNA(Gln). The chain is Aspartyl/glutamyl-tRNA(Asn/Gln) amidotransferase subunit C from Thermoanaerobacter pseudethanolicus (strain ATCC 33223 / 39E) (Clostridium thermohydrosulfuricum).